The chain runs to 319 residues: Transcription initiation factor IIB 6 (319 aa).

The span at 1–16 shows a compositional bias: basic and acidic residues; that stretch reads MTDARMRSREQERTDE. The segment at 1–33 is disordered; it reads MTDARMRSREQERTDETESESTDGCPECGGLVV. The TFIIB-type zinc-finger motif lies at 21 to 51; the sequence is STDGCPECGGLVVNDEEHGESVCADCGLVVE. 4 residues coordinate Zn(2+): Cys-25, Cys-28, Cys-43, and Cys-46. The segment covering 59–74 has biased composition (basic and acidic residues); sequence PEWRAFDSKEKDEKSR. Residues 59–89 are disordered; that stretch reads PEWRAFDSKEKDEKSRVGAPTTNTMHDKGLS. Tandem repeats lie at residues 137-220 and 231-312.

Belongs to the TFIIB family.

Functionally, stabilizes TBP binding to an archaeal box-A promoter. Also responsible for recruiting RNA polymerase II to the pre-initiation complex (DNA-TBP-TFIIB). This is Transcription initiation factor IIB 6 from Halobacterium salinarum (strain ATCC 700922 / JCM 11081 / NRC-1) (Halobacterium halobium).